Here is a 190-residue protein sequence, read N- to C-terminus: GTP cyclohydrolase 1 (190 aa).

Cysteine 80, histidine 83, and cysteine 151 together coordinate Zn(2+).

Belongs to the GTP cyclohydrolase I family. Toroid-shaped homodecamer, composed of two pentamers of five dimers.

It catalyses the reaction GTP + H2O = 7,8-dihydroneopterin 3'-triphosphate + formate + H(+). It participates in cofactor biosynthesis; 7,8-dihydroneopterin triphosphate biosynthesis; 7,8-dihydroneopterin triphosphate from GTP: step 1/1. This is GTP cyclohydrolase 1 from Rickettsia typhi (strain ATCC VR-144 / Wilmington).